A 115-amino-acid chain; its full sequence is Ribonuclease P protein component (115 aa).

The protein belongs to the RnpA family. In terms of assembly, consists of a catalytic RNA component (M1 or rnpB) and a protein subunit.

The enzyme catalyses Endonucleolytic cleavage of RNA, removing 5'-extranucleotides from tRNA precursor.. Functionally, RNaseP catalyzes the removal of the 5'-leader sequence from pre-tRNA to produce the mature 5'-terminus. It can also cleave other RNA substrates such as 4.5S RNA. The protein component plays an auxiliary but essential role in vivo by binding to the 5'-leader sequence and broadening the substrate specificity of the ribozyme. The sequence is that of Ribonuclease P protein component from Bacillus cereus (strain ATCC 10987 / NRS 248).